Reading from the N-terminus, the 444-residue chain is GTPase Der (444 aa).

2 consecutive EngA-type G domains span residues 3–167 (PIVA…PEAE) and 180–353 (LRLA…AECQ). GTP-binding positions include 9-16 (GRPNVGKS), 56-60 (DTGGM), 119-122 (NKVD), 186-193 (GRPNAGKS), 233-237 (DTAGV), and 298-301 (NKTD). The KH-like domain maps to 354–438 (IRIGTGELNR…PVKVVCRASH (85 aa)).

It belongs to the TRAFAC class TrmE-Era-EngA-EngB-Septin-like GTPase superfamily. EngA (Der) GTPase family. In terms of assembly, associates with the 50S ribosomal subunit.

Functionally, GTPase that plays an essential role in the late steps of ribosome biogenesis. The sequence is that of GTPase Der from Solidesulfovibrio magneticus (strain ATCC 700980 / DSM 13731 / RS-1) (Desulfovibrio magneticus).